The sequence spans 261 residues: Snake venom serine protease (261 aa).

Positions Met-1–Thr-20 are cleaved as a signal peptide. Positions Ala-21–Arg-24 are excised as a propeptide. A Peptidase S1 domain is found at Ile-25–Ala-249. 6 cysteine pairs are disulfide-bonded: Cys-31–Cys-163, Cys-50–Cys-66, Cys-98–Cys-256, Cys-142–Cys-210, Cys-174–Cys-189, and Cys-200–Cys-225. The active-site Charge relay system is His-65. Asn-103 carries N-linked (GlcNAc...) asparagine glycosylation. Asp-110 acts as the Charge relay system in catalysis. N-linked (GlcNAc...) asparagine glycans are attached at residues Asn-117 and Asn-121. The active-site Charge relay system is the Ser-204.

Belongs to the peptidase S1 family. Snake venom subfamily. In terms of assembly, monomer. Expressed by the venom gland.

It is found in the secreted. Snake venom serine protease that may act in the hemostasis system of the prey. This chain is Snake venom serine protease, found in Philodryas olfersii (Green snake).